We begin with the raw amino-acid sequence, 401 residues long: Imidazolonepropionase (401 aa).

Fe(3+)-binding residues include His66 and His68. Positions 66 and 68 each coordinate Zn(2+). Residues Arg75, Tyr138, and His171 each coordinate 4-imidazolone-5-propanoate. Residue Tyr138 participates in N-formimidoyl-L-glutamate binding. His236 is a Fe(3+) binding site. His236 contributes to the Zn(2+) binding site. Gln239 serves as a coordination point for 4-imidazolone-5-propanoate. Position 311 (Asp311) interacts with Fe(3+). Zn(2+) is bound at residue Asp311. Asn313 and Gly315 together coordinate N-formimidoyl-L-glutamate. Thr316 is a 4-imidazolone-5-propanoate binding site.

It belongs to the metallo-dependent hydrolases superfamily. HutI family. It depends on Zn(2+) as a cofactor. Fe(3+) is required as a cofactor.

The protein resides in the cytoplasm. The catalysed reaction is 4-imidazolone-5-propanoate + H2O = N-formimidoyl-L-glutamate. Its pathway is amino-acid degradation; L-histidine degradation into L-glutamate; N-formimidoyl-L-glutamate from L-histidine: step 3/3. Its function is as follows. Catalyzes the hydrolytic cleavage of the carbon-nitrogen bond in imidazolone-5-propanoate to yield N-formimidoyl-L-glutamate. It is the third step in the universal histidine degradation pathway. This is Imidazolonepropionase from Pseudomonas fluorescens (strain ATCC BAA-477 / NRRL B-23932 / Pf-5).